Reading from the N-terminus, the 393-residue chain is Small RNA 2'-O-methyltransferase (393 aa).

Residues Tyr36, Gly55, Asp78, Lys83, Val115, and Ile131 each coordinate S-adenosyl-L-methionine. Residues Glu132, Glu135, His136, and His181 each coordinate Mg(2+). The tract at residues 286–307 (HLPRRKEQAGERGDKPKDIGGS) is disordered. Positions 290 to 305 (RKEQAGERGDKPKDIG) are enriched in basic and acidic residues.

The protein belongs to the methyltransferase superfamily. HEN1 family. The cofactor is Mg(2+).

The protein localises to the cytoplasm. The enzyme catalyses small RNA 3'-end nucleotide + S-adenosyl-L-methionine = small RNA 3'-end 2'-O-methylnucleotide + S-adenosyl-L-homocysteine + H(+). Functionally, methyltransferase that adds a 2'-O-methyl group at the 3'-end of piRNAs, a class of 24 to 30 nucleotide RNAs that are generated by a Dicer-independent mechanism and are primarily derived from transposons and other repeated sequence elements. This probably protects the 3'-end of piRNAs from uridylation activity and subsequent degradation. Stabilization of piRNAs is essential for gametogenesis. In Homo sapiens (Human), this protein is Small RNA 2'-O-methyltransferase (HENMT1).